A 274-amino-acid chain; its full sequence is Diaminopimelate epimerase (274 aa).

3 residues coordinate substrate: asparagine 11, glutamine 44, and asparagine 64. The active-site Proton donor is cysteine 73. Substrate-binding positions include 74–75, asparagine 157, asparagine 190, and 208–209; these read GN and ER. The active-site Proton acceptor is cysteine 217. A substrate-binding site is contributed by 218–219; it reads GS.

The protein belongs to the diaminopimelate epimerase family. Homodimer.

It is found in the cytoplasm. It catalyses the reaction (2S,6S)-2,6-diaminopimelate = meso-2,6-diaminopimelate. Its pathway is amino-acid biosynthesis; L-lysine biosynthesis via DAP pathway; DL-2,6-diaminopimelate from LL-2,6-diaminopimelate: step 1/1. In terms of biological role, catalyzes the stereoinversion of LL-2,6-diaminopimelate (L,L-DAP) to meso-diaminopimelate (meso-DAP), a precursor of L-lysine and an essential component of the bacterial peptidoglycan. This Actinobacillus succinogenes (strain ATCC 55618 / DSM 22257 / CCUG 43843 / 130Z) protein is Diaminopimelate epimerase.